The primary structure comprises 467 residues: Cytochrome P450 monooxygenase azaI (467 aa).

The N-terminal stretch at 1-28 is a signal peptide; the sequence is MESLAQLPGIFLPLAGCVLALSLSALLA. Position 411 (Cys411) interacts with heme.

Belongs to the cytochrome P450 family. Heme is required as a cofactor.

It participates in secondary metabolite biosynthesis. Functionally, cytochrome P450 monooxygenase; part of the gene cluster that mediates the biosynthesis of azaphilones, a class of fungal metabolites characterized by a highly oxygenated pyrano-quinone bicyclic core and exhibiting a broad range of bioactivities. In the first step, the non-reducing polyketide synthase azaA forms the hexaketide precursor from successive condensations of five malonyl-CoA units, presumably with a simple acetyl-CoA starter unit. The reactive polyketide chain then undergoes a PT-mediated C2-C7 cyclization to afford the aromatic ring and is eventually released as an aldehyde through the R-domain. The putative ketoreductase azaE is proposed to catalyze the reduction of the terminal ketone resulting in the early culture product FK17-P2a. The monooxygenase azaH was demonstrated to be the only enzyme required to convert FK17-P2a to azanigerone E. AzaH first hydroxylates the benzaldehyde intermediate FK17-P2a at C4, which triggers the formation of the pyran-ring to afford azanigerone E. In parallel, the 2,4-dimethylhexanoyl chain is synthesized by the HR-PKS azaB and is proposed to be transferred to the C4-hydroxyl of azanigerone E by the acyltransferase azaD directly from the ACP domain of azaB. Alternatively, the 2,4-dimethyl-hexanoyl chain may be offloaded from the HR-PKS as a carboxylic acid and converted to an acyl-CoA by azaF. The resulting acyl-CoA molecule could then be taken up as a substrate by AzaD to form azanigerone B. To yield the carboxylic acid substituent in azanigerone A, the hydroxypropyl side chain of azanigerone B would need to undergo a C-C oxidative cleavage catalyzed by cytochrome P450 AzaI. AzaI is proposed to act on a vicinal diol that leads to a C-C bond scission either through an alkoxyradical intermediate or a peroxy complex. In the biosynthesis of azanigerone A, azanigerone B first undergoes hydroxylation at C10, possibly catalyzed by one of the two FAD-dependent monooxygenases encoded in the cluster, azaG or azaL, resulting in the vicinal diol azanigerone C. Oxidative cleavage of azanigerone C by azaI would yield the corresponding aldehyde derivative of azanigerone A. Finally, the dehydrogenase azaJ is proposed to convert the aldehyde functional group into the carboxylic acid, completing the conversion from azanigerone B to azanigerone A. Alternatively, the oxidation of aldehyde to carboxylic acid may be catalyzed by the same P450 enzyme azaI via consecutive oxidation or by endogenous alcohol dehydrogenase. The chain is Cytochrome P450 monooxygenase azaI from Aspergillus niger (strain ATCC 1015 / CBS 113.46 / FGSC A1144 / LSHB Ac4 / NCTC 3858a / NRRL 328 / USDA 3528.7).